The chain runs to 197 residues: MIIRSAEFVISAVQPSQYPDTDLPEIAFAGRSNVGKSSMINLLVNRKNLVKTSSTPGKTRLINFFDINGQLMFVDLPGYGYAKVSRKEQKTWGPMVERYLSSRKTLRGLMLLMDLRREPREDEFLMMQWCAHYDIPWKMVLTKADKFKKTAADRRRHEIARAVGIGADEMILFSTLQKMGRDPALETIARMTGILEE.

The EngB-type G domain occupies 22–194; the sequence is DLPEIAFAGR…LETIARMTGI (173 aa). GTP is bound by residues 30-37, 57-61, 75-78, 142-145, and 173-175; these read GRSNVGKS, GKTRL, DLPG, TKAD, and FST. Mg(2+)-binding residues include Ser37 and Thr59.

This sequence belongs to the TRAFAC class TrmE-Era-EngA-EngB-Septin-like GTPase superfamily. EngB GTPase family. Mg(2+) serves as cofactor.

Its function is as follows. Necessary for normal cell division and for the maintenance of normal septation. The protein is Probable GTP-binding protein EngB of Desulfosudis oleivorans (strain DSM 6200 / JCM 39069 / Hxd3) (Desulfococcus oleovorans).